Reading from the N-terminus, the 276-residue chain is Protein MGF 360-15R (276 aa).

It belongs to the asfivirus MGF 360 family.

Plays a role in virus cell tropism, and may be required for efficient virus replication in macrophages. This African swine fever virus (isolate Warthog/Namibia/Wart80/1980) (ASFV) protein is Protein MGF 360-15R.